The sequence spans 218 residues: Capsid protein (218 aa).

M1 bears the N-acetylmethionine; by host mark. Residues 1-28 (MDKSESTSAGRNRRRRPRRGSRSAPSSA) are disordered. The segment covering 11 to 21 (RNRRRRPRRGS) has biased composition (basic residues).

This sequence belongs to the cucumovirus capsid protein family.

The protein resides in the virion. Capsid protein. Probably binds RNA and plays a role in packaging. The polypeptide is Capsid protein (Cucumis sativus (Cucumber)).